Reading from the N-terminus, the 432-residue chain is Adenylosuccinate synthetase (432 aa).

Residues 12-18 (GDEGKGK) and 40-42 (GHT) contribute to the GTP site. D13 (proton acceptor) is an active-site residue. The Mg(2+) site is built by D13 and G40. IMP contacts are provided by residues 13–16 (DEGK), 38–41 (NAGH), T132, R146, Q226, T241, and R305. H41 acts as the Proton donor in catalysis. 301-307 (TVTGRKR) provides a ligand contact to substrate. GTP is bound by residues R307, 333 to 335 (KLD), and 415 to 417 (STS).

It belongs to the adenylosuccinate synthetase family. In terms of assembly, homodimer. Mg(2+) serves as cofactor.

It is found in the cytoplasm. The enzyme catalyses IMP + L-aspartate + GTP = N(6)-(1,2-dicarboxyethyl)-AMP + GDP + phosphate + 2 H(+). Its pathway is purine metabolism; AMP biosynthesis via de novo pathway; AMP from IMP: step 1/2. Plays an important role in the de novo pathway of purine nucleotide biosynthesis. Catalyzes the first committed step in the biosynthesis of AMP from IMP. The chain is Adenylosuccinate synthetase from Sinorhizobium fredii (strain NBRC 101917 / NGR234).